Here is a 221-residue protein sequence, read N- to C-terminus: Probable chemoreceptor glutamine deamidase CheD 1 (221 aa).

This sequence belongs to the CheD family.

It catalyses the reaction L-glutaminyl-[protein] + H2O = L-glutamyl-[protein] + NH4(+). Functionally, probably deamidates glutamine residues to glutamate on methyl-accepting chemotaxis receptors (MCPs), playing an important role in chemotaxis. The protein is Probable chemoreceptor glutamine deamidase CheD 1 of Methanosarcina mazei (strain ATCC BAA-159 / DSM 3647 / Goe1 / Go1 / JCM 11833 / OCM 88) (Methanosarcina frisia).